We begin with the raw amino-acid sequence, 688 residues long: Glycine--tRNA ligase beta subunit (688 aa).

Belongs to the class-II aminoacyl-tRNA synthetase family. As to quaternary structure, tetramer of two alpha and two beta subunits.

It localises to the cytoplasm. It catalyses the reaction tRNA(Gly) + glycine + ATP = glycyl-tRNA(Gly) + AMP + diphosphate. In Haemophilus influenzae (strain PittGG), this protein is Glycine--tRNA ligase beta subunit.